Here is a 370-residue protein sequence, read N- to C-terminus: MASLPTQGPAAPDFFNGLLPASSSPVNQSSETVVGNGSAAGPGSQAITPFQSLQLVHQLKGLIVLLYSIVVVVGLVGNCLLVLVIARVRRLHNVTNFLIGNLALSDVLMCTACVPLTLAYAFEPRGWVFGGGLCHLVFFLQPVTVYVSVFTLTTIAVDRYVVLVHPLRRRISLRFSAYAVLAIWALSAVLALPAALHTYHVELKPHRVRLCEEFWGSQERQRQLYAWGLLLVTYLLPLLVILLSYVRVSVNLRNRVVPGCVTQSQADWDRARRRRTFCLLVVVVVVFAVCWLPLHVFNLLRDLDPHAIDPYAFGLVQLLCHWLAMSSACYNPFIYAWLHDSFREELRKLLLAWPRKIAPHGQSMTVSVVI.

At 1–62 the chain is on the extracellular side; the sequence is MASLPTQGPA…LQLVHQLKGL (62 aa). N-linked (GlcNAc...) asparagine glycosylation is found at Asn-27 and Asn-36. The helical transmembrane segment at 63–83 threads the bilayer; it reads IVLLYSIVVVVGLVGNCLLVL. Residues 84 to 101 lie on the Cytoplasmic side of the membrane; it reads VIARVRRLHNVTNFLIGN. Residues 102–122 traverse the membrane as a helical segment; that stretch reads LALSDVLMCTACVPLTLAYAF. At 123-126 the chain is on the extracellular side; that stretch reads EPRG. Residues 127-147 traverse the membrane as a helical segment; that stretch reads WVFGGGLCHLVFFLQPVTVYV. The cysteines at positions 134 and 211 are disulfide-linked. Topologically, residues 148–175 are cytoplasmic; that stretch reads SVFTLTTIAVDRYVVLVHPLRRRISLRF. Residues 176 to 196 traverse the membrane as a helical segment; it reads SAYAVLAIWALSAVLALPAAL. Residues 197–225 are Extracellular-facing; it reads HTYHVELKPHRVRLCEEFWGSQERQRQLY. A helical membrane pass occupies residues 226-246; the sequence is AWGLLLVTYLLPLLVILLSYV. At 247–276 the chain is on the cytoplasmic side; that stretch reads RVSVNLRNRVVPGCVTQSQADWDRARRRRT. The helical transmembrane segment at 277–297 threads the bilayer; it reads FCLLVVVVVVFAVCWLPLHVF. Over 298–317 the chain is Extracellular; it reads NLLRDLDPHAIDPYAFGLVQ. A helical transmembrane segment spans residues 318-338; it reads LLCHWLAMSSACYNPFIYAWL. Topologically, residues 339–369 are cytoplasmic; that stretch reads HDSFREELRKLLLAWPRKIAPHGQSMTVSVV. Residues 365-370 are required for interaction with GRIP1, GRIP2 and PICK1; the sequence is TVSVVI.

Belongs to the G-protein coupled receptor 1 family. Interacts through its C-terminal region with the PDZ domain-containing proteins GRIP1, GRIP2 and PICK1. Interacts with PDZ domains 4 and 5 of GRIP1 and with the PDZ domain of PICK1.

It localises to the cell membrane. Receptor for prolactin-releasing peptide (PrRP). Implicated in lactation, regulation of food intake and pain-signal processing. This chain is Prolactin-releasing peptide receptor (PRLHR), found in Bos taurus (Bovine).